We begin with the raw amino-acid sequence, 88 residues long: Small ribosomal subunit protein bS20 (88 aa).

Disordered regions lie at residues 1–23 (MANT…VNKA) and 65–88 (GVMH…SLSA).

This sequence belongs to the bacterial ribosomal protein bS20 family.

In terms of biological role, binds directly to 16S ribosomal RNA. The polypeptide is Small ribosomal subunit protein bS20 (Rhizobium meliloti (strain 1021) (Ensifer meliloti)).